Consider the following 711-residue polypeptide: L-type lectin-domain containing receptor kinase VIII.2 (711 aa).

Positions 1–30 (MLKLPPRFFSVYSTLIHILASFLCSSDVRG) are cleaved as a signal peptide. Residues 31–315 (DFPATRFDLG…NKLCKKSPAA (285 aa)) lie on the Extracellular side of the membrane. The segment at 35 to 260 (TRFDLGTLTL…IHSVDWWSFS (226 aa)) is legume-lectin like. A glycan (N-linked (GlcNAc...) asparagine) is linked at asparagine 57. A disordered region spans residues 265 to 306 (ESSESPPPMPNSPPPSSPSSSITPSLSTVRRKTADPSSSCRN). The segment covering 269 to 281 (SPPPMPNSPPPSS) has biased composition (pro residues). Low complexity predominate over residues 282–291 (PSSSITPSLS). The chain crosses the membrane as a helical span at residues 316 to 336 (VAGVVTAGAFFLALFAGVIIW). The Cytoplasmic portion of the chain corresponds to 337–711 (VYSKKIKYTR…IFIVGKDRSV (375 aa)). The Protein kinase domain maps to 374–656 (FSSSRVIGNG…LVGEADVPEV (283 aa)). ATP-binding positions include 380–388 (IGNGAFGTV) and lysine 403. The active-site Proton acceptor is the aspartate 497.

It in the C-terminal section; belongs to the protein kinase superfamily. Ser/Thr protein kinase family. This sequence in the N-terminal section; belongs to the leguminous lectin family.

It localises to the cell membrane. The catalysed reaction is L-seryl-[protein] + ATP = O-phospho-L-seryl-[protein] + ADP + H(+). The enzyme catalyses L-threonyl-[protein] + ATP = O-phospho-L-threonyl-[protein] + ADP + H(+). Its function is as follows. Involved in resistance response to the pathogenic oomycetes Phytophthora infestans and Phytophthora capsici. In Arabidopsis thaliana (Mouse-ear cress), this protein is L-type lectin-domain containing receptor kinase VIII.2.